The chain runs to 463 residues: Probable Xaa-Pro aminopeptidase pepP (463 aa).

Mn(2+)-binding residues include Asp259, Asp270, Glu393, and Glu433.

It belongs to the peptidase M24B family. Mn(2+) serves as cofactor.

The enzyme catalyses Release of any N-terminal amino acid, including proline, that is linked to proline, even from a dipeptide or tripeptide.. In terms of biological role, catalyzes the removal of a penultimate prolyl residue from the N-termini of peptides. This chain is Probable Xaa-Pro aminopeptidase pepP (pepP), found in Pyrenophora teres f. teres (strain 0-1) (Barley net blotch fungus).